The following is a 141-amino-acid chain: MAKKVVALIKLALPAGKANPAPPVGPALGQHGVNIMAFCKEYNAKTADKPGMIIPVEISVFEDRSFTFILKTPPASVLIRKAAGVEKGSSEPNKNKVASITREQLREIAQTKLPDLNANDIDAAMNIIEGTARNMGITVNS.

This sequence belongs to the universal ribosomal protein uL11 family. In terms of assembly, part of the ribosomal stalk of the 50S ribosomal subunit. Interacts with L10 and the large rRNA to form the base of the stalk. L10 forms an elongated spine to which L12 dimers bind in a sequential fashion forming a multimeric L10(L12)X complex. In terms of processing, one or more lysine residues are methylated.

Its function is as follows. Forms part of the ribosomal stalk which helps the ribosome interact with GTP-bound translation factors. The protein is Large ribosomal subunit protein uL11 of Synechocystis sp. (strain ATCC 27184 / PCC 6803 / Kazusa).